Here is a 2089-residue protein sequence, read N- to C-terminus: Non-reducing polyketide synthase PKS16 (2089 aa).

The tract at residues 8-243 (VLFGDQTVDP…IKLPITAAFH (236 aa)) is N-terminal acylcarrier protein transacylase (SAT) domain (SAT). Residues 342–364 (AGIEVSRSTEMQPRQEQRTKPRS) are disordered. The span at 354 to 364 (PRQEQRTKPRS) shows a compositional bias: basic and acidic residues. Residues 364 to 793 (SSDIAIIGYA…GGNTSLLIED (430 aa)) enclose the Ketosynthase family 3 (KS3) domain. Catalysis depends on for beta-ketoacyl synthase activity residues cysteine 536, histidine 671, and histidine 710. Residues 891–1214 (VFLFTGQGSQ…SIANAYNSGV (324 aa)) form a malonyl-CoA:ACP transacylase (MAT) domain region. The tract at residues 1273–1586 (TTCLQVIENE…KRTTLQSLLG (314 aa)) is product template (PT) domain. The interval 1276 to 1408 (LQVIENETFT…CTVMYGDGHQ (133 aa)) is N-terminal hotdog fold. One can recognise a PKS/mFAS DH domain in the interval 1276–1582 (LQVIENETFT…FQQMKRTTLQ (307 aa)). Histidine 1309 functions as the Proton acceptor; for dehydratase activity in the catalytic mechanism. The tract at residues 1435–1582 (IHRMLKEMIY…FQQMKRTTLQ (148 aa)) is C-terminal hotdog fold. The active-site Proton donor; for dehydratase activity is aspartate 1495. The Carrier 1 domain occupies 1617 to 1694 (QSPVAGFSKV…ELRAFFLDKM (78 aa)). O-(pantetheine 4'-phosphoryl)serine is present on serine 1654. Residues 1697–1730 (PQATANDDDSDDSSDDEGPGFSRSQSNSTISTPE) form a disordered region. A compositionally biased stretch (acidic residues) spans 1702–1714 (NDDDSDDSSDDEG). Polar residues predominate over residues 1718–1728 (SRSQSNSTIST). Residues 1729-1806 (PEEPDVVNVL…DVQKALGAAP (78 aa)) form the Carrier 2 domain. O-(pantetheine 4'-phosphoryl)serine is present on serine 1766. A thioesterase (TE) domain region spans residues 1848–2083 (LFLLPDGAGS…VVGGNHFSIM (236 aa)).

It participates in secondary metabolite biosynthesis. Non-reducing polyketide synthase; part of the gene cluster that mediates the biosynthesis of orcinol depsidone grayanic acid (GRA), the only major secondary metabolite known in C.grayi. The first step consists in the ring and depside synthesis by PKS16 leading to 4-O-demethylsphaerophorin, involving different orcinol-like rings, one with acetyl CoA and the other with octanoyl CoA as the starter. Further depsidone formation by the GRA cluster-specific cytochrome P450 leads to 4-O-demethylgrayanic acid. Finally, the cluster specific O-methyltransferase probably converts the 4-O-demethylgrayanic acid into grayanic acid. This is Non-reducing polyketide synthase PKS16 from Cladonia grayi (Gray's cup lichen).